We begin with the raw amino-acid sequence, 116 residues long: NADH dehydrogenase [ubiquinone] iron-sulfur protein 6, mitochondrial (116 aa).

Residues 1 to 20 constitute a mitochondrion transit peptide; the sequence is MAAALTFRRLLALPRAARGF. Position 90 is an N6-acetyllysine (Lys90).

This sequence belongs to the complex I NDUFS6 subunit family. As to quaternary structure, mammalian complex I is composed of 45 different subunits. This is a component of the iron-sulfur (IP) fragment of the enzyme.

Its subcellular location is the mitochondrion inner membrane. In terms of biological role, accessory subunit of the mitochondrial membrane respiratory chain NADH dehydrogenase (Complex I), that is believed not to be involved in catalysis. Complex I functions in the transfer of electrons from NADH to the respiratory chain. The immediate electron acceptor for the enzyme is believed to be ubiquinone. This is NADH dehydrogenase [ubiquinone] iron-sulfur protein 6, mitochondrial (Ndufs6) from Rattus norvegicus (Rat).